A 144-amino-acid polypeptide reads, in one-letter code: Intraflagellar transport protein 25 homolog (144 aa).

Positions 29, 32, and 37 each coordinate Ca(2+).

It belongs to the IFT25 family. Component of the IFT complex B, at least composed of IFT20, IFT22, IFT25, IFT27, IFT46, IFT52, TRAF3IP1/IFT54, IFT57, IFT74, IFT80, IFT81, and IFT88. Interacts with IFT27. Interacts with IFT88. As to expression, detected in placenta.

The protein resides in the cell projection. It is found in the cilium. In terms of biological role, component of the IFT complex B required for sonic hedgehog/SHH signaling. May mediate transport of SHH components: required for the export of SMO and PTCH1 receptors out of the cilium and the accumulation of GLI2 at the ciliary tip in response to activation of the SHH pathway, suggesting it is involved in the dynamic transport of SHH signaling molecules within the cilium. Not required for ciliary assembly. Its role in intraflagellar transport is mainly seen in tissues rich in ciliated cells such as kidney and testis. Essential for male fertility, spermiogenesis and sperm flagella formation. Plays a role in the early development of the kidney. May be involved in the regulation of ureteric bud initiation. The chain is Intraflagellar transport protein 25 homolog from Homo sapiens (Human).